Consider the following 251-residue polypeptide: Phosphomannomutase (251 aa).

The active-site Nucleophile is aspartate 18. The Mg(2+) site is built by aspartate 18 and aspartate 20. Aspartate 20 (proton donor/acceptor) is an active-site residue. 6 residues coordinate alpha-D-mannose 1-phosphate: arginine 27, arginine 129, arginine 140, arginine 147, serine 185, and aspartate 187. Residues aspartate 213, phenylalanine 225, aspartate 227, and threonine 230 each contribute to the Mg(2+) site.

This sequence belongs to the eukaryotic PMM family. Homodimer. Mg(2+) is required as a cofactor.

The protein localises to the cytoplasm. It catalyses the reaction alpha-D-mannose 1-phosphate = D-mannose 6-phosphate. The protein operates within nucleotide-sugar biosynthesis; GDP-alpha-D-mannose biosynthesis; alpha-D-mannose 1-phosphate from D-fructose 6-phosphate: step 2/2. Catalyzes the interconversion of mannose-6-phosphate to mannose-1-phosphate, the precursor for the synthesis of GDP-mannose. GDP-mannose is an essential sugar nucleotide for the synthesis of D-mannose-containing cell wall polysaccharides (galactomannans and glucomannans), glycolipids, glycoproteins and the antioxidant L-ascorbate. This chain is Phosphomannomutase, found in Galdieria sulphuraria (Red alga).